Consider the following 435-residue polypeptide: Glutamine synthetase (435 aa).

The GS beta-grasp domain occupies 12 to 94; that stretch reads KGVKYFMISY…VAADCIMDDA (83 aa). A GS catalytic domain is found at 100–435; it reads PRVVLKKLVA…EWEHQTTLDV (336 aa). The Mg(2+) site is built by glutamate 123, glutamate 125, glutamate 180, and glutamate 187. Position 232 (glycine 232) interacts with L-glutamate. Histidine 236 contacts Mg(2+). An ATP-binding site is contributed by serine 240. Residues arginine 291 and arginine 315 each contribute to the L-glutamate site. Arginine 315 and arginine 320 together coordinate ATP. Glutamate 328 contributes to the Mg(2+) binding site. Arginine 330 contributes to the L-glutamate binding site.

This sequence belongs to the glutamine synthetase family. In terms of assembly, homooctamer. Requires Mg(2+) as cofactor.

The enzyme catalyses L-glutamate + NH4(+) + ATP = L-glutamine + ADP + phosphate + H(+). With respect to regulation, inhibited by methionine sulfoximine, ADP and pyrophosphate, but not by various nitrogen-containing metabolites that inhibit other GS enzymes. Functionally, catalyzes the ATP-dependent biosynthesis of glutamine from glutamate and ammonia. The chain is Glutamine synthetase from Rhizobium meliloti (strain 1021) (Ensifer meliloti).